We begin with the raw amino-acid sequence, 457 residues long: LLLGAVAGSEVCYDRLGCFSDDSPWAGIVERPLKVLPWSPSTINTRFLLYTNESPNNYQIVTADSSTIRSSNFRTDRKTRFIIHGYIDKGEENWLANMCEALLQVESVNCICVDWKGGSRALYTQATQNIRVVGAEVAYFVDALQSQLGYSPSNVHIIGHSLGSHVAGEAGRRTNGNIGRITGLDPAEPCFQGTPELVRLDPSDAQFVDVIHTDGAPIIPNLGFGMSQTVGHLDFFPNGGVEMPGCQKNIISQIVDINGIWEGTRDFAACNHLRSYKYYIDSILNPTGFAGFSCSSYNTFSSNNCFPCASGGCPQMGHYADRFSGKTNELFQQFYLNTGDASNFSRWRYQIAVTLSGRKVTGHVLVSLYGSGGTSKQYEIYKGSLQPGTSYVNQIDSDVDVGDIEKVKFIWYNNIINPTLPKVGASSIQVTRNDGRVFNFCSQDTVREDILLTLTPC.

An N-terminal signal peptide occupies residues Leu1–Ala7. 2 disulfide bridges follow: Cys12–Cys18 and Cys99–Cys110. Ser161 (nucleophile) is an active-site residue. Catalysis depends on Asp185, which acts as the Charge relay system. Ca(2+) contacts are provided by Glu196, Arg199, Asp201, and Asp204. The cysteines at positions 246 and 270 are disulfide-linked. His272 acts as the Charge relay system in catalysis. Intrachain disulfides connect Cys294–Cys305 and Cys308–Cys313. A glycan (N-linked (GlcNAc...) asparagine) is linked at Asn343. Positions Trp347–Cys457 constitute a PLAT domain. Cys441 and Cys457 are oxidised to a cystine.

Belongs to the AB hydrolase superfamily. Lipase family. In terms of assembly, forms a 1:1 stoichiometric complex with (pro)colipase/CLPS.

Its subcellular location is the secreted. It catalyses the reaction a triacylglycerol + H2O = a diacylglycerol + a fatty acid + H(+). The enzyme catalyses 1,2,3-tributanoylglycerol + H2O = dibutanoylglycerol + butanoate + H(+). The catalysed reaction is 1,2,3-tri-(9Z-octadecenoyl)-glycerol + H2O = di-(9Z)-octadecenoylglycerol + (9Z)-octadecenoate + H(+). It carries out the reaction all-trans-retinyl hexadecanoate + H2O = all-trans-retinol + hexadecanoate + H(+). It catalyses the reaction 1,2-di-(9Z-octadecenoyl)-glycerol + H2O = (9Z-octadecenoyl)-glycerol + (9Z)-octadecenoate + H(+). With respect to regulation, inhibited by bile salts, is reactivated by (pro)colipase/CLPS. Its function is as follows. Plays an important role in fat metabolism. It preferentially splits the esters of long-chain fatty acids at positions 1 and 3, producing mainly 2-monoacylglycerol and free fatty acids, and shows considerably higher activity against insoluble emulsified substrates than against soluble ones. The chain is Pancreatic triacylglycerol lipase (PNLIP) from Myocastor coypus (Coypu).